The primary structure comprises 552 residues: 4-coumarate--CoA ligase-like 4 (552 aa).

Residues 182 to 205 (ISATTPDPARRKDRVTQDDPATLL) are disordered. The segment covering 189 to 198 (PARRKDRVTQ) has biased composition (basic and acidic residues). 6 residues coordinate ATP: serine 207, serine 208, glycine 209, threonine 210, threonine 211, and lysine 215. Tyrosine 256 is a binding site for (E)-4-coumaroyl-AMP. Lysine 277 contacts CoA. The SBD1 stretch occupies residues 279–346 (ELPEMLRSIN…EKYPQVEILQ (68 aa)). Positions 324, 346, 347, and 351 each coordinate (E)-4-coumaroyl-AMP. Glutamine 346, glycine 347, threonine 351, aspartate 432, and arginine 447 together coordinate ATP. Residues 347 to 411 (GYGLTESTAI…IRGPYVMKGY (65 aa)) are SBD2. 2 residues coordinate (E)-4-coumaroyl-AMP: lysine 449 and lysine 453. Residues lysine 455 and glycine 456 each contribute to the CoA site. ATP is bound at residue lysine 538.

This sequence belongs to the ATP-dependent AMP-binding enzyme family. The cofactor is Mg(2+).

It catalyses the reaction (E)-4-coumarate + ATP + CoA = (E)-4-coumaroyl-CoA + AMP + diphosphate. The enzyme catalyses (E)-4-coumarate + ATP + H(+) = (E)-4-coumaroyl-AMP + diphosphate. It carries out the reaction (E)-4-coumaroyl-AMP + CoA = (E)-4-coumaroyl-CoA + AMP + H(+). Functionally, carboxylate--CoA ligase that may use 4-coumarate as substrate. Follows a two-step reaction mechanism, wherein the carboxylate substrate first undergoes adenylation by ATP, followed by a thioesterification in the presence of CoA to yield the final CoA thioester. In Oryza sativa subsp. japonica (Rice), this protein is 4-coumarate--CoA ligase-like 4 (4CLL4).